A 360-amino-acid chain; its full sequence is Type II methyltransferase M2.ScrFI (360 aa).

An SAM-dependent MTase C5-type domain is found at 2–360; sequence LRVFEAFAGY…SLFKELFKSQ (359 aa). The active site involves C127.

The protein belongs to the class I-like SAM-binding methyltransferase superfamily. C5-methyltransferase family.

It carries out the reaction a 2'-deoxycytidine in DNA + S-adenosyl-L-methionine = a 5-methyl-2'-deoxycytidine in DNA + S-adenosyl-L-homocysteine + H(+). Functionally, a methylase, recognizes the double-stranded sequence 5'-CCNGG-3', methylates C-2 on both strands, and protects the DNA from cleavage by the ScrFI endonuclease. The chain is Type II methyltransferase M2.ScrFI (scrFIBM) from Lactococcus lactis subsp. cremoris (Streptococcus cremoris).